The chain runs to 160 residues: 3-dehydroquinate dehydratase (160 aa).

Y28 acts as the Proton acceptor in catalysis. Residues N79, H85, and D92 each contribute to the substrate site. The Proton donor role is filled by H105. Substrate is bound by residues 106-107 (MS) and R116.

The protein belongs to the type-II 3-dehydroquinase family. As to quaternary structure, homododecamer.

It carries out the reaction 3-dehydroquinate = 3-dehydroshikimate + H2O. The protein operates within metabolic intermediate biosynthesis; chorismate biosynthesis; chorismate from D-erythrose 4-phosphate and phosphoenolpyruvate: step 3/7. In terms of biological role, catalyzes a trans-dehydration via an enolate intermediate. The sequence is that of 3-dehydroquinate dehydratase from Gloeobacter violaceus (strain ATCC 29082 / PCC 7421).